The chain runs to 435 residues: T-box transcription factor T (435 aa).

A DNA-binding region (T-box) is located at residues 51–219 (LWLRFKELTN…YNPFAKAFLD (169 aa)). The segment at 279–308 (YPTLRSHRSSPYPSPYAHRNNSPTYSDNSP) is disordered. The segment covering 297–308 (RNNSPTYSDNSP) has biased composition (polar residues).

In terms of assembly, monomer. Detected in testis, but not in other, normal tissues. Detected in lung tumors (at protein level).

The protein localises to the nucleus. Functionally, involved in the transcriptional regulation of genes required for mesoderm formation and differentiation. Binds to a palindromic T site 5'-TTCACACCTAGGTGTGAA-3' DNA sequence and activates gene transcription when bound to such a site. The protein is T-box transcription factor T of Homo sapiens (Human).